The sequence spans 113 residues: UPF0342 protein SMU_782 (113 aa).

The protein belongs to the UPF0342 family.

The chain is UPF0342 protein SMU_782 from Streptococcus mutans serotype c (strain ATCC 700610 / UA159).